Consider the following 315-residue polypeptide: 6-phosphogluconolactonase-like protein 2 (315 aa).

Residues Ser-42 and Ser-64 each carry the phosphoserine modification. Residues 59–85 are disordered; it reads CKSTASAAEGKSGSSGSGSGSSKPKKE. A compositionally biased stretch (low complexity) spans 60–70; that stretch reads KSTASAAEGKS.

The protein belongs to the glucosamine/galactosamine-6-phosphate isomerase family. 6-phosphogluconolactonase subfamily.

Its subcellular location is the cytoplasm. May be involved in regulation of tRNA subcellular distribution. The protein is 6-phosphogluconolactonase-like protein 2 (SOL2) of Saccharomyces cerevisiae (strain ATCC 204508 / S288c) (Baker's yeast).